Reading from the N-terminus, the 273-residue chain is Dermonecrotic toxin LruSicTox-alphaIC1c (273 aa).

The active site involves His-5. Mg(2+) contacts are provided by Glu-25 and Asp-27. The active-site Nucleophile is His-41. Disulfide bonds link Cys-45-Cys-51 and Cys-47-Cys-190. Asp-85 contributes to the Mg(2+) binding site.

The protein belongs to the arthropod phospholipase D family. Class II subfamily. Mg(2+) serves as cofactor. Expressed by the venom gland.

It localises to the secreted. The enzyme catalyses an N-(acyl)-sphingosylphosphocholine = an N-(acyl)-sphingosyl-1,3-cyclic phosphate + choline. It catalyses the reaction an N-(acyl)-sphingosylphosphoethanolamine = an N-(acyl)-sphingosyl-1,3-cyclic phosphate + ethanolamine. It carries out the reaction a 1-acyl-sn-glycero-3-phosphocholine = a 1-acyl-sn-glycero-2,3-cyclic phosphate + choline. The catalysed reaction is a 1-acyl-sn-glycero-3-phosphoethanolamine = a 1-acyl-sn-glycero-2,3-cyclic phosphate + ethanolamine. Functionally, dermonecrotic toxins cleave the phosphodiester linkage between the phosphate and headgroup of certain phospholipids (sphingolipid and lysolipid substrates), forming an alcohol (often choline) and a cyclic phosphate. This toxin acts on sphingomyelin (SM). It may also act on ceramide phosphoethanolamine (CPE), lysophosphatidylcholine (LPC) and lysophosphatidylethanolamine (LPE), but not on lysophosphatidylserine (LPS), and lysophosphatidylglycerol (LPG). It acts by transphosphatidylation, releasing exclusively cyclic phosphate products as second products. Induces dermonecrosis, hemolysis, increased vascular permeability, edema, inflammatory response, and platelet aggregation. In Loxosceles rufescens (Mediterranean recluse spider), this protein is Dermonecrotic toxin LruSicTox-alphaIC1c.